Reading from the N-terminus, the 487-residue chain is Dihydrofolate synthase/folylpolyglutamate synthase (487 aa).

44–46 (DPS) is a 7,8-dihydropteroate binding site. Residue 74–77 (GKTS) coordinates ATP. Threonine 76 and serine 98 together coordinate Mg(2+). 150-153 (SKFE) contributes to the 7,8-dihydropteroate binding site. A Mg(2+)-binding site is contributed by glutamate 174. Residue 181-183 (WDA) participates in 7,8-dihydropteroate binding. Mg(2+) contacts are provided by histidine 201 and aspartate 203. Residues asparagine 301, arginine 338, and 351-354 (DAAH) each bind ATP. Aspartate 384 lines the Mg(2+) pocket.

It belongs to the folylpolyglutamate synthase family. In terms of assembly, monomer. Mg(2+) serves as cofactor.

It catalyses the reaction 7,8-dihydropteroate + L-glutamate + ATP = 7,8-dihydrofolate + ADP + phosphate + H(+). The enzyme catalyses (6S)-5,6,7,8-tetrahydrofolyl-(gamma-L-Glu)(n) + L-glutamate + ATP = (6S)-5,6,7,8-tetrahydrofolyl-(gamma-L-Glu)(n+1) + ADP + phosphate + H(+). It participates in cofactor biosynthesis; tetrahydrofolate biosynthesis; 7,8-dihydrofolate from 2-amino-4-hydroxy-6-hydroxymethyl-7,8-dihydropteridine diphosphate and 4-aminobenzoate: step 2/2. It functions in the pathway cofactor biosynthesis; tetrahydrofolylpolyglutamate biosynthesis. Catalyzes the addition of a glutamate residue to dihydropteroate (7,8-dihydropteroate or H2Pte) to form dihydrofolate (7,8-dihydrofolate monoglutamate or H2Pte-Glu). Also catalyzes successive additions of L-glutamate to tetrahydrofolate, leading to folylpolyglutamate derivatives. Its function is as follows. Is involved in the bioactivation of the antituberculous drug para-aminosalicylic acid (PAS). Is able to use hydroxy-dihydropteroate (H2PtePAS) as substrate, which is the product formed by the action of DHPS (FolP1) on PAS, leading to hydroxy-dihydrofolate (H2PtePAS-Glu). This compound inhibits dihydrofolate reductase DHFR (DfrA), the next enzyme in the folate pathway, and thus disrupts the folate-dependent metabolic pathways. In Mycobacterium tuberculosis (strain ATCC 25618 / H37Rv), this protein is Dihydrofolate synthase/folylpolyglutamate synthase.